We begin with the raw amino-acid sequence, 222 residues long: Germin-like protein subfamily 1 member 13 (222 aa).

The N-terminal stretch at 1-18 is a signal peptide; sequence MRVSKSLILITLSALVIS. An intrachain disulfide couples Cys32 to Cys49. Positions 63-214 constitute a Cupin type-1 domain; sequence SGLNQAGSTN…AFQLDVNIVE (152 aa). N-linked (GlcNAc...) asparagine glycosylation is present at Asn78. Mn(2+) contacts are provided by His111, His113, Glu118, and His160.

Belongs to the germin family. In terms of assembly, oligomer (believed to be a pentamer but probably hexamer).

The protein localises to the secreted. The protein resides in the extracellular space. It localises to the apoplast. In terms of biological role, may play a role in plant defense. Probably has no oxalate oxidase activity even if the active site is conserved. The polypeptide is Germin-like protein subfamily 1 member 13 (GLP6) (Arabidopsis thaliana (Mouse-ear cress)).